We begin with the raw amino-acid sequence, 459 residues long: DIMBOA UDP-glucosyltransferase BX8 (459 aa).

Histidine 19 (proton acceptor) is an active-site residue. Residue histidine 19 coordinates an anthocyanidin. The active-site Charge relay is aspartate 119. The UDP-alpha-D-glucose site is built by threonine 141, alanine 340, glutamine 342, histidine 357, tryptophan 360, asparagine 361, serine 362, and glutamate 365. An an anthocyanidin-binding site is contributed by glycine 380. Residues aspartate 381 and glutamine 382 each coordinate UDP-alpha-D-glucose.

This sequence belongs to the UDP-glycosyltransferase family. It depends on Mg(2+) as a cofactor. The cofactor is Ca(2+). Expressed at the same levels in roots and shoots.

The catalysed reaction is DIMBOA + UDP-alpha-D-glucose = DIMBOA beta-D-glucoside + UDP + H(+). It carries out the reaction DIBOA + UDP-alpha-D-glucose = DIBOA beta-D-glucoside + UDP + H(+). Glucosyltransferase involved in the last step of benzoxazinoid glucoside biosynthesis. Catalyzes the glucosylation of hydroxamic acids utilizing UDP-glucose as glucose doner, reducing the toxicity of these natural insecticides for storage. Can use DIMBOA and DIBOA as substrates, HMBOA (2-hydroxy-7-methoxy-2H-1,4-benzoxazin-3(4H)-one) and HBOA (2-hydroxy-2H-1,4-benzoxazin-3(4H)-one) with a lower efficiency, but not indole acetic acid or quercitin. This is DIMBOA UDP-glucosyltransferase BX8 (Bx8) from Zea mays (Maize).